Consider the following 339-residue polypeptide: MIRQKIAVLGPGSWGTALSQVLNDNGHEVRIWGNIPEQLDEINEHHTNKRYFKDVVLDEKIKAYHDLEDALKDIDAVLFVVPTKVTRLVAKQVSQILDHKAVVMHASKGLEPGTHERLSVILEEEIPNHLRSDIVVVSGPSHAEETIVRDITLITAASKDLEAAKYVQKLFSNNYFRLYTNPDVIGVETAGALKNIIAVGAGALHGMGYGDNAKAAVITRGLAEITRLGVKLGADPLTYSGLSGVGDLIVTGTSIYSRNWRAGDALGRGEKLEDIERNMGMVIEGISTTKVAYELSRELNVYMPITCAIYQSIYEGKNIKEAITSMMSNEFRAENEWSK.

Residues S13, W14, and K108 each coordinate NADPH. Sn-glycerol 3-phosphate-binding residues include K108, G139, and S141. NADPH is bound at residue A143. Sn-glycerol 3-phosphate contacts are provided by K194, D247, S257, R258, and N259. Catalysis depends on K194, which acts as the Proton acceptor. R258 is a binding site for NADPH. Residues V282 and E284 each coordinate NADPH.

Belongs to the NAD-dependent glycerol-3-phosphate dehydrogenase family.

It localises to the cytoplasm. It carries out the reaction sn-glycerol 3-phosphate + NAD(+) = dihydroxyacetone phosphate + NADH + H(+). The catalysed reaction is sn-glycerol 3-phosphate + NADP(+) = dihydroxyacetone phosphate + NADPH + H(+). The protein operates within membrane lipid metabolism; glycerophospholipid metabolism. In terms of biological role, catalyzes the reduction of the glycolytic intermediate dihydroxyacetone phosphate (DHAP) to sn-glycerol 3-phosphate (G3P), the key precursor for phospholipid synthesis. The protein is Glycerol-3-phosphate dehydrogenase [NAD(P)+] of Streptococcus mutans serotype c (strain ATCC 700610 / UA159).